Reading from the N-terminus, the 628-residue chain is Otolith matrix protein OMM-64 (628 aa).

The signal sequence occupies residues 1–20 (MLSRLLIVPLIFALAGLAIS). The tract at residues 43 to 628 (KGDKDGGGLT…AAATALAAQS (586 aa)) is disordered. Low complexity predominate over residues 78 to 93 (DSSPDTTDTPDASSSD). Over residues 182–214 (TESPGSDSAESPGSDSAESPGSDSTESPGSDST) the composition is skewed to polar residues. Composition is skewed to basic and acidic residues over residues 246–266 (ETDK…ATDK), 276–285 (ELDGKAHAED), and 311–343 (RPEK…RDSA). Asn318 is a glycosylation site (N-linked (GlcNAc...) asparagine). 5 stretches are compositionally biased toward acidic residues: residues 449–462 (DSQE…EAEP), 477–489 (EPQE…DTDD), 514–536 (DKED…MDKD), 544–556 (DSVD…DAEP), and 565–578 (DEID…PDSE). Low complexity predominate over residues 613-628 (ASQAADAAATALAAQS).

In terms of tissue distribution, specifically expressed in otolith matrix-producing cells.

The protein localises to the secreted. It is found in the extracellular space. It localises to the extracellular matrix. Its function is as follows. Calcium-binding component of otoliths, a calcium carbonate structure of the inner ear involved in hearing and balance sensing. Binds calcium. The chain is Otolith matrix protein OMM-64 from Oncorhynchus mykiss (Rainbow trout).